A 707-amino-acid polypeptide reads, in one-letter code: Polyribonucleotide nucleotidyltransferase (707 aa).

The Mg(2+) site is built by aspartate 486 and aspartate 492. A KH domain is found at proline 553–isoleucine 612. Residues glycine 622–lysine 690 enclose the S1 motif domain.

Belongs to the polyribonucleotide nucleotidyltransferase family. It depends on Mg(2+) as a cofactor.

It localises to the cytoplasm. The catalysed reaction is RNA(n+1) + phosphate = RNA(n) + a ribonucleoside 5'-diphosphate. Its function is as follows. Involved in mRNA degradation. Catalyzes the phosphorolysis of single-stranded polyribonucleotides processively in the 3'- to 5'-direction. The sequence is that of Polyribonucleotide nucleotidyltransferase from Sulfurihydrogenibium azorense (strain DSM 15241 / OCM 825 / Az-Fu1).